Reading from the N-terminus, the 430-residue chain is tRNA pseudouridine synthase Pus10 (430 aa).

D253 serves as the catalytic Nucleophile. Y320 and Y392 together coordinate substrate.

The protein belongs to the pseudouridine synthase Pus10 family.

It catalyses the reaction uridine(54) in tRNA = pseudouridine(54) in tRNA. The enzyme catalyses uridine(55) in tRNA = pseudouridine(55) in tRNA. Functionally, responsible for synthesis of pseudouridine from uracil-54 and uracil-55 in the psi GC loop of transfer RNAs. The chain is tRNA pseudouridine synthase Pus10 from Ignisphaera aggregans (strain DSM 17230 / JCM 13409 / AQ1.S1).